We begin with the raw amino-acid sequence, 308 residues long: Phosphoribosylaminoimidazole-succinocarboxamide synthase (308 aa).

Belongs to the SAICAR synthetase family.

It catalyses the reaction 5-amino-1-(5-phospho-D-ribosyl)imidazole-4-carboxylate + L-aspartate + ATP = (2S)-2-[5-amino-1-(5-phospho-beta-D-ribosyl)imidazole-4-carboxamido]succinate + ADP + phosphate + 2 H(+). It participates in purine metabolism; IMP biosynthesis via de novo pathway; 5-amino-1-(5-phospho-D-ribosyl)imidazole-4-carboxamide from 5-amino-1-(5-phospho-D-ribosyl)imidazole-4-carboxylate: step 1/2. The sequence is that of Phosphoribosylaminoimidazole-succinocarboxamide synthase from Xylella fastidiosa (strain 9a5c).